The chain runs to 392 residues: Tryptophan synthase beta chain 1 (392 aa).

K85 carries the post-translational modification N6-(pyridoxal phosphate)lysine.

This sequence belongs to the TrpB family. In terms of assembly, tetramer of two alpha and two beta chains. Pyridoxal 5'-phosphate serves as cofactor.

The catalysed reaction is (1S,2R)-1-C-(indol-3-yl)glycerol 3-phosphate + L-serine = D-glyceraldehyde 3-phosphate + L-tryptophan + H2O. It functions in the pathway amino-acid biosynthesis; L-tryptophan biosynthesis; L-tryptophan from chorismate: step 5/5. Functionally, the beta subunit is responsible for the synthesis of L-tryptophan from indole and L-serine. The chain is Tryptophan synthase beta chain 1 (trpB1) from Methanothermobacter thermautotrophicus (strain ATCC 29096 / DSM 1053 / JCM 10044 / NBRC 100330 / Delta H) (Methanobacterium thermoautotrophicum).